The following is a 642-amino-acid chain: Regulator of MON1-CCZ1 complex (642 aa).

Positions 462–616 constitute a Mic1 domain; it reads RPYTESILML…KLYETLSFPK (155 aa).

Belongs to the RMC1 family. Component of the Mon1-Ccz1 guanyl-nucleotide exchange factor complex made up of Mon1, Ccz1 and Bulli; the interaction of Bulli with the Mon1-Ccz1 heterodimer is mediated via the C-terminal Mic1 domain of Bulli. Mon1 and Ccz1 form a stable complex which displays Rab7 GEF activity with or without Bulli; GEF activity is enhanced by Bulli possibly by improving membrane association of the complex.

It is found in the late endosome. Functionally, positive regulator of the Rab7 guanyl-nucleotide exchange activity of the Mon1-Ccz1 complex, possibly by enhancing its endosomal membrane association. As part of the Mon1-Ccz1 complex involved in endolysosomal biogenesis possibly by mediating Rab conversion, the replacement of Rab5 with Rab7 during late endosome maturation. The polypeptide is Regulator of MON1-CCZ1 complex (Drosophila melanogaster (Fruit fly)).